Consider the following 35-residue polypeptide: UPF0387 membrane protein YohO (35 aa).

The chain crosses the membrane as a helical span at residues 6–26 (IGVIALFLFMAFGGIGGVMLA).

It belongs to the UPF0387 family.

It localises to the cell inner membrane. This chain is UPF0387 membrane protein YohO, found in Escherichia coli O8 (strain IAI1).